We begin with the raw amino-acid sequence, 470 residues long: Nuclear receptor subfamily 0 group B member 1 (470 aa).

3 consecutive repeat copies span residues 1–67 (MAGE…YRCC), 68–133 (FCGK…YRCC), and 134–200 (FCGE…YRCC). Residues 1–253 (MAGENHQWQG…RPVALKNPQV (253 aa)) are 4 X 67 AA tandem repeats. 3 consecutive short sequence motifs (LXXLL motif) follow at residues 13 to 17 (LYNML), 80 to 84 (LYSML), and 146 to 150 (LYSLL). One copy of the 4; truncated repeat lies at 201–253 (FCGEDHPQQGSTLYCMPTSTNQAQAAPEERPRAPWWDASSGALRPVALKNPQV). The 255-residue stretch at 215–469 (CMPTSTNQAQ…DMMLEMLCTK (255 aa)) folds into the NR LBD domain. Positions 461–466 (MMLEML) match the AF-2 motif motif.

It belongs to the nuclear hormone receptor family. NR0 subfamily. Homodimer. Interacts with NR5A1, NR5A2, NR0B2 and with COPS2. Interacts with ESRRB; represses ESRRB activity at the GATA6 promoter.

It is found in the nucleus. The protein resides in the cytoplasm. Its function is as follows. Nuclear receptor that lacks a DNA-binding domain and acts as a corepressor that inhibits the transcriptional activity of other nuclear receptors through heterodimeric interactions. Component of a cascade required for the development of the hypothalamic-pituitary-adrenal-gonadal axis. May also have a role in the development of the embryo and in the maintenance of embryonic stem cell pluripotency. This chain is Nuclear receptor subfamily 0 group B member 1 (NR0B1), found in Pongo pygmaeus (Bornean orangutan).